The chain runs to 569 residues: Zinc finger and BTB domain-containing protein 7A (569 aa).

The BTB domain occupies 34-101 (CDVVILVEGR…AYTATLTVST (68 aa)). Positions 214-304 (YGPGPPADRP…LSGAAEGEDG (91 aa)) are disordered. The tract at residues 275–569 (EEEAAALSEA…VATAEGNFAT (295 aa)) is mediates interaction with KHDRBS1. Low complexity predominate over residues 279 to 288 (AALSEAAPEP). Phosphoserine is present on residues serine 331 and serine 335. Residues 343–569 (MDYYLKYFSG…VATAEGNFAT (227 aa)) are mediates interaction with RELA. The interval 371–569 (RAKAFQKCPI…VATAEGNFAT (199 aa)) is mediates interaction with SMAD4. 2 consecutive C2H2-type zinc fingers follow at residues 376 to 398 (QKCPICEKVIQGAGKLPRHIRTH) and 404 to 426 (YECNICKVRFTRQDKLKVHMRKH). Lysine 430 is covalently cross-linked (Glycyl lysine isopeptide (Lys-Gly) (interchain with G-Cter in SUMO2)). Residues 432–454 (YLCQQCGAAFAHNYDLKNHMRVH) form a C2H2-type 3 zinc finger. Residues 460–484 (YQCDSCCKTFVRSDHLHRHLKKDGC) form a C2H2-type 4; atypical zinc finger. Residues 480–569 (KKDGCNGVPS…VATAEGNFAT (90 aa)) form a disordered region. Residues 498–519 (RGVPPDVPAGAGAPPGLPDAPR) are compositionally biased toward low complexity. Residue lysine 527 forms a Glycyl lysine isopeptide (Lys-Gly) (interchain with G-Cter in SUMO2) linkage. A Phosphoserine modification is found at serine 537. Gly residues predominate over residues 548–557 (GSGGDDGAGG).

Homodimer. Interacts with BCL6. Interacts with RELA; involved in the control by RELA of the accessibility of target gene promoters. Interacts with AR (via NR LBD domain); the interaction is direct and androgen-dependent. Interacts with NCOR1. Interacts with NCOR2. Interacts with SMAD4; the interaction is direct and stimulated by TGFB1. Interacts with HDAC1. Interacts with SP1; ZBTB7A prevents the binding to GC-rich motifs in promoters and represses the transcriptional activity of SP1. Interacts with the DNA-dependent protein kinase complex/DNA-PKc. Interacts with KHDRBS1; negatively regulates KHDRBS1 splicing activity. In terms of processing, sumoylated. Undergoes sumoylation with SUMO1 that may regulate its transcriptional activity. As to expression, widely expressed. In normal thymus, expressed in medullary epithelial cells and Hassle's corpuscles (at protein level). In the spleen, mainly expressed in the white pulp germinal centers (at protein level). Up-regulated in thymic lymphomas.

The protein resides in the nucleus. Functionally, transcription factor that represses the transcription of a wide range of genes involved in cell proliferation and differentiation. Directly and specifically binds to the consensus sequence 5'-[GA][CA]GACCCCCCCCC-3' and represses transcription both by regulating the organization of chromatin and through the direct recruitment of transcription factors to gene regulatory regions. Negatively regulates SMAD4 transcriptional activity in the TGF-beta signaling pathway through these two mechanisms. That is, recruits the chromatin regulator HDAC1 to the SMAD4-DNA complex and in parallel prevents the recruitment of the transcriptional activators CREBBP and EP300. Collaborates with transcription factors like RELA to modify the accessibility of gene transcription regulatory regions to secondary transcription factors. Also directly interacts with transcription factors like SP1 to prevent their binding to DNA. Functions as an androgen receptor/AR transcriptional corepressor by recruiting NCOR1 and NCOR2 to the androgen response elements/ARE on target genes. Thereby, negatively regulates androgen receptor signaling and androgen-induced cell proliferation. Involved in the switch between fetal and adult globin expression during erythroid cells maturation. Through its interaction with the NuRD complex regulates chromatin at the fetal globin genes to repress their transcription. Specifically represses the transcription of the tumor suppressor ARF isoform from the CDKN2A gene. Efficiently abrogates E2F1-dependent CDKN2A transactivation. Regulates chondrogenesis through the transcriptional repression of specific genes via a mechanism that also requires histone deacetylation. Regulates cell proliferation through the transcriptional regulation of genes involved in glycolysis. Involved in adipogenesis through the regulation of genes involved in adipocyte differentiation. Plays a key role in the differentiation of lymphoid progenitors into B and T lineages. Promotes differentiation towards the B lineage by inhibiting the T-cell instructive Notch signaling pathway through the specific transcriptional repression of Notch downstream target genes. Also regulates osteoclast differentiation. May also play a role, independently of its transcriptional activity, in double-strand break repair via classical non-homologous end joining/cNHEJ. Recruited to double-strand break sites on damage DNA, interacts with the DNA-dependent protein kinase complex and directly regulates its stability and activity in DNA repair. May also modulate the splicing activity of KHDRBS1 toward BCL2L1 in a mechanism which is histone deacetylase-dependent and thereby negatively regulates the pro-apoptotic effect of KHDRBS1. This Mus musculus (Mouse) protein is Zinc finger and BTB domain-containing protein 7A.